The primary structure comprises 383 residues: 8-amino-7-oxononanoate synthase (383 aa).

Substrate is bound at residue Arg-21. 108–109 (GY) is a binding site for pyridoxal 5'-phosphate. His-133 contacts substrate. Pyridoxal 5'-phosphate-binding residues include Ser-179, His-207, and Thr-233. An N6-(pyridoxal phosphate)lysine modification is found at Lys-236. Residue Thr-350 participates in substrate binding.

Belongs to the class-II pyridoxal-phosphate-dependent aminotransferase family. BioF subfamily. In terms of assembly, homodimer. Requires pyridoxal 5'-phosphate as cofactor.

The enzyme catalyses 6-carboxyhexanoyl-[ACP] + L-alanine + H(+) = (8S)-8-amino-7-oxononanoate + holo-[ACP] + CO2. The protein operates within cofactor biosynthesis; biotin biosynthesis. Catalyzes the decarboxylative condensation of pimeloyl-[acyl-carrier protein] and L-alanine to produce 8-amino-7-oxononanoate (AON), [acyl-carrier protein], and carbon dioxide. The sequence is that of 8-amino-7-oxononanoate synthase from Yersinia pseudotuberculosis serotype IB (strain PB1/+).